Consider the following 368-residue polypeptide: Alanine racemase (368 aa).

K35 acts as the Proton acceptor; specific for D-alanine in catalysis. Residue K35 is modified to N6-(pyridoxal phosphate)lysine. R130 is a binding site for substrate. Catalysis depends on Y253, which acts as the Proton acceptor; specific for L-alanine. A substrate-binding site is contributed by M305.

It belongs to the alanine racemase family. Pyridoxal 5'-phosphate serves as cofactor.

The enzyme catalyses L-alanine = D-alanine. It participates in amino-acid biosynthesis; D-alanine biosynthesis; D-alanine from L-alanine: step 1/1. Its function is as follows. Catalyzes the interconversion of L-alanine and D-alanine. May also act on other amino acids. In Cupriavidus metallidurans (strain ATCC 43123 / DSM 2839 / NBRC 102507 / CH34) (Ralstonia metallidurans), this protein is Alanine racemase (alr).